The sequence spans 239 residues: Probable transcriptional regulatory protein EF_2866 (239 aa).

This sequence belongs to the TACO1 family. YeeN subfamily.

Its subcellular location is the cytoplasm. This Enterococcus faecalis (strain ATCC 700802 / V583) protein is Probable transcriptional regulatory protein EF_2866.